Consider the following 1556-residue polypeptide: Ubiquitin carboxyl-terminal hydrolase 47 (1556 aa).

Residues 117–231 (MKSDGEKAKS…AKKTAKVTSK (115 aa)) form a disordered region. A compositionally biased stretch (low complexity) spans 146–156 (ASGSSSPSKAK). Phosphoserine is present on residues S172 and S173. The segment covering 180 to 189 (IKTTAAKISK) has biased composition (low complexity). The span at 191 to 200 (GSEKAPRASP) shows a compositional bias: basic and acidic residues. Over residues 208–219 (TEINSKNTSSES) the composition is skewed to polar residues. A Phosphoserine modification is found at S238. Residues 396 to 779 (VGLVNQAMTC…NAYMLMYRQV (384 aa)) form the USP domain. C405 (nucleophile) is an active-site residue. 2 stretches are compositionally biased toward polar residues: residues 628 to 642 (NRSGNSGEQNSQLNG) and 661 to 673 (LSSGVVTTASSSQ). Positions 628–697 (NRSGNSGEQN…SSSTSKSAKQ (70 aa)) are disordered. The segment covering 688 to 697 (SSSTSKSAKQ) has biased composition (low complexity). Residue H720 is the Proton acceptor of the active site. The tract at residues 1087–1148 (EPMSQPSPSH…LSSPEDEAAS (62 aa)) is disordered. A compositionally biased stretch (basic and acidic residues) spans 1109 to 1125 (DGDRTLVETDNMAHRGG). Residues 1128-1141 (SQVSSTSHSPQLSS) show a composition bias toward low complexity. 7 positions are modified to phosphoserine: S1131, S1132, S1140, S1141, S1199, S1201, and S1205.

Belongs to the peptidase C19 family. In terms of assembly, interacts with ttk.

The protein resides in the nucleus. It catalyses the reaction Thiol-dependent hydrolysis of ester, thioester, amide, peptide and isopeptide bonds formed by the C-terminal Gly of ubiquitin (a 76-residue protein attached to proteins as an intracellular targeting signal).. Its function is as follows. Ubiquitin-specific protease that deubiquitinates target proteins to regulate different cellular and developmental pathways. Functions downstream of Dsor1/MEK to positively regulate the Ras/MAPK signaling pathway. Likely to modulate the pathway during various cellular and developmental processes including rl/MAPK activation by the receptors InR, Egfr and sevenless/sev. Functions in the post-translational stabilization of rl/MAPK levels in a mechanism that is independent of rl activity and opposes the activity of the E2 enzyme Unc6 and the putative E3 ligases poe, Ufd4 and Kcmf1, which mediate the ubiquitination and proteasomal degradation of rl. During eye development it may also act downstream of rl/MAPK to negatively regulate the Ras/MAPK signaling pathway by stabilizing the transcriptional repressor ttk and consequently inhibiting photoreceptor cell development. This suggests that at least during eye development, it may act in both the positive and negative regulation of the Ras/MAPK signaling pathway to mediate the development of different cell types. Positively regulates border follicle cell migration during oogenesis by mediating the deubiquitination and stabilization of slbo. In the wing disks it positively regulates wg signaling by stabilizing arm. Has an effect on position-effect variegation. This is Ubiquitin carboxyl-terminal hydrolase 47 from Drosophila melanogaster (Fruit fly).